The primary structure comprises 1357 residues: DNA-directed RNA polymerase subunit beta (1357 aa).

Belongs to the RNA polymerase beta chain family. The RNAP catalytic core consists of 2 alpha, 1 beta, 1 beta' and 1 omega subunit. When a sigma factor is associated with the core the holoenzyme is formed, which can initiate transcription.

It carries out the reaction RNA(n) + a ribonucleoside 5'-triphosphate = RNA(n+1) + diphosphate. Functionally, DNA-dependent RNA polymerase catalyzes the transcription of DNA into RNA using the four ribonucleoside triphosphates as substrates. This chain is DNA-directed RNA polymerase subunit beta, found in Pseudomonas fluorescens (strain Pf0-1).